The primary structure comprises 354 residues: Guanine nucleotide-binding protein G(t) subunit alpha-3 (354 aa).

Residues M1–D26 are disordered. Residue G2 is the site of N-myristoyl glycine attachment. Residues E8–D26 show a composition bias toward basic and acidic residues. The region spanning R32–F354 is the G-alpha domain. A G1 motif region spans residues K35–T48. GTP contacts are provided by residues G40 to S47, L175 to T181, D200 to Q204, N269 to D272, and A326. 2 residues coordinate Mg(2+): S47 and T181. Positions D173–T181 are G2 motif. The tract at residues F196–R205 is G3 motif. Residues V265–D272 form a G4 motif region. A G5 motif region spans residues T324–T329.

This sequence belongs to the G-alpha family. G(i/o/t/z) subfamily. In terms of assembly, g proteins are composed of 3 units; alpha, beta and gamma, respectively GNAT3, GNB1 and GNG13 for Gustducin heterotrimer for bitter taste transduction. The alpha chain contains the guanine nucleotide binding site. Component of the TAS2R14-GNAT3 complex, consisting of TAS2R14, GNAT3, GNB1 and GNG2; within the complex interacts with TAS2R14; this complex plays a role in the perception of bitterness. Gustducin heterotrimer may also be composed of GNAT3, GNB3 and GNG13. Expressed in epithelial cells of taste buds of the circumvallate, foliate and fungiform. Detected in various region of the respiratory track. Expressed also in spermatozoa.

The protein localises to the cytoplasm. Its function is as follows. Guanine nucleotide-binding protein (G protein) alpha subunit playing a prominent role in bitter and sweet taste transduction as well as in umami (monosodium glutamate, monopotassium glutamate, and inosine monophosphate) taste transduction. The sequence is that of Guanine nucleotide-binding protein G(t) subunit alpha-3 (GNAT3) from Bos taurus (Bovine).